The chain runs to 259 residues: Proteasome subunit alpha (259 aa).

It belongs to the peptidase T1A family. As to quaternary structure, the 20S proteasome core is composed of 14 alpha and 14 beta subunits that assemble into four stacked heptameric rings, resulting in a barrel-shaped structure. The two inner rings, each composed of seven catalytic beta subunits, are sandwiched by two outer rings, each composed of seven alpha subunits. The catalytic chamber with the active sites is on the inside of the barrel. Has a gated structure, the ends of the cylinder being occluded by the N-termini of the alpha-subunits. Is capped at one or both ends by the proteasome regulatory ATPase, PAN.

Its subcellular location is the cytoplasm. Its activity is regulated as follows. The formation of the proteasomal ATPase PAN-20S proteasome complex, via the docking of the C-termini of PAN into the intersubunit pockets in the alpha-rings, triggers opening of the gate for substrate entry. Interconversion between the open-gate and close-gate conformations leads to a dynamic regulation of the 20S proteasome proteolysis activity. Its function is as follows. Component of the proteasome core, a large protease complex with broad specificity involved in protein degradation. The chain is Proteasome subunit alpha from Methanococcus maripaludis (strain C6 / ATCC BAA-1332).